Here is a 149-residue protein sequence, read N- to C-terminus: Large ribosomal subunit protein bL9 (149 aa).

Belongs to the bacterial ribosomal protein bL9 family.

In terms of biological role, binds to the 23S rRNA. The chain is Large ribosomal subunit protein bL9 from Klebsiella pneumoniae subsp. pneumoniae (strain ATCC 700721 / MGH 78578).